Consider the following 1385-residue polypeptide: DNA-directed RNA polymerase subunit beta' (1385 aa).

Residues C72, C74, C87, and C90 each coordinate Zn(2+). Mg(2+) contacts are provided by D463, D465, and D467. Residues C813, C887, C894, and C897 each coordinate Zn(2+).

It belongs to the RNA polymerase beta' chain family. In terms of assembly, the RNAP catalytic core consists of 2 alpha, 1 beta, 1 beta' and 1 omega subunit. When a sigma factor is associated with the core the holoenzyme is formed, which can initiate transcription. Mg(2+) serves as cofactor. It depends on Zn(2+) as a cofactor.

The enzyme catalyses RNA(n) + a ribonucleoside 5'-triphosphate = RNA(n+1) + diphosphate. Its function is as follows. DNA-dependent RNA polymerase catalyzes the transcription of DNA into RNA using the four ribonucleoside triphosphates as substrates. This chain is DNA-directed RNA polymerase subunit beta', found in Trichlorobacter lovleyi (strain ATCC BAA-1151 / DSM 17278 / SZ) (Geobacter lovleyi).